We begin with the raw amino-acid sequence, 437 residues long: Trigger factor (437 aa).

The 87-residue stretch at 165–251 (GDLVVIDFKG…LHTIKEKEKI (87 aa)) folds into the PPIase FKBP-type domain.

The protein belongs to the FKBP-type PPIase family. Tig subfamily.

It is found in the cytoplasm. It catalyses the reaction [protein]-peptidylproline (omega=180) = [protein]-peptidylproline (omega=0). Involved in protein export. Acts as a chaperone by maintaining the newly synthesized protein in an open conformation. Functions as a peptidyl-prolyl cis-trans isomerase. The sequence is that of Trigger factor from Nitratiruptor sp. (strain SB155-2).